The chain runs to 350 residues: C5a anaphylatoxin chemotactic receptor 1 (350 aa).

Residues 1–37 (MDSFNYTTPDYGHYDDKDTLDPNTPVDKTSNTLRVPD) are Extracellular-facing. The interval 10 to 18 (DYGHYDDKD) is required for CHIPS binding. Sulfotyrosine is present on residues tyrosine 11 and tyrosine 14. The interval 21 to 30 (DPNTPVDKTS) is involved in C5a binding. The helical transmembrane segment at 38–64 (ILALVIFAVVFLVGVLGNALVVWVTAF) threads the bilayer. Residues 65–69 (EVKRT) are Cytoplasmic-facing. Residues 70–93 (INAIWFLNLAVADFLSCLALPILF) form a helical membrane-spanning segment. Topologically, residues 94 to 110 (TSIVQHHHWPFGGAACR) are extracellular. Cysteine 109 and cysteine 188 are joined by a disulfide. The chain crosses the membrane as a helical span at residues 111–132 (ILPSLILLNMYASILLLATISA). Over 133 to 153 (DRFLLVFKPIWCQNFRGAGLA) the chain is Cytoplasmic. The chain crosses the membrane as a helical span at residues 154–174 (WIACAVAWGLALLLTIPSFLY). Topologically, residues 175–200 (RVVREEYFPPKVLCGVDYSHDKQRER) are extracellular. Residues 201–226 (AVAVVRLVLGFLWPLLTLTICYTFIL) traverse the membrane as a helical segment. The Cytoplasmic portion of the chain corresponds to 227–242 (LRTWSRRATRSTKTLK). Residues 243 to 265 (VVVAVVASFFIFWLPYQVTGIMM) form a helical membrane-spanning segment. Residues 266 to 282 (SFLEPSSPTFLLLKKLD) are Extracellular-facing. The helical transmembrane segment at 283 to 303 (SLCVSFAYINCCINPIIYVVA) threads the bilayer. At 304–350 (GQGFQGRLRKSLPSLLRNVLTEESVVRESKSFTRSTVDTMAEKTQAV) the chain is on the cytoplasmic side. Phosphoserine occurs at positions 314, 317, 327, 332, 334, and 338.

This sequence belongs to the G-protein coupled receptor 1 family. Homodimer. May also form higher-order oligomers. Interacts (when phosphorylated) with ARRB1 and ARRB2; the interaction is associated with internalization of C5aR. Interacts (via N-terminal domain) with S.aureus chemotaxis inhibitory protein (CHIPS); the interaction blocks the receptor and may thus inhibit the immune response. In terms of processing, sulfation plays a critical role in the association of C5aR with C5a, but no significant role in the ability of the receptor to transduce a signal and mobilize calcium in response to a small peptide agonist. Sulfation at Tyr-14 is important for CHIPS binding. Phosphorylated on serine residues in response to C5a binding, resulting in internalization of the receptor and short-term desensitization to C5a.

Its subcellular location is the cell membrane. It localises to the cytoplasmic vesicle. Functionally, receptor for the chemotactic and inflammatory peptide anaphylatoxin C5a. The ligand interacts with at least two sites on the receptor: a high-affinity site on the extracellular N-terminus, and a second site in the transmembrane region which activates downstream signaling events. Receptor activation stimulates chemotaxis, granule enzyme release, intracellular calcium release and superoxide anion production. In Gorilla gorilla gorilla (Western lowland gorilla), this protein is C5a anaphylatoxin chemotactic receptor 1 (C5AR1).